The sequence spans 353 residues: Putative glycosyltransferase TagX (353 aa).

It belongs to the glycosyltransferase 2 family.

In Staphylococcus aureus (strain MSSA476), this protein is Putative glycosyltransferase TagX (tagX).